The following is a 123-amino-acid chain: MAKIKARDLRGKKKEELLKQLEDLKVELSQLRVAKVTGGAASKLSKIRVVRKSIARVLTVINQTQKENLRKFYKGKKYKPLDLRPKKTRAMRRRLNKHEENLKTKKQQRKERLYPLRKFAVKA.

An N6-acetyllysine modification is found at lysine 19. Lysine 25 participates in a covalent cross-link: Glycyl lysine isopeptide (Lys-Gly) (interchain with G-Cter in SUMO2). Phosphoserine is present on serine 29. N6-acetyllysine is present on lysine 43.

This sequence belongs to the universal ribosomal protein uL29 family. Component of the large ribosomal subunit.

Its subcellular location is the cytoplasm. Functionally, component of the large ribosomal subunit. The ribosome is a large ribonucleoprotein complex responsible for the synthesis of proteins in the cell. The chain is Large ribosomal subunit protein uL29 (RPL35) from Sus scrofa (Pig).